Here is an 877-residue protein sequence, read N- to C-terminus: Translation initiation factor IF-2 (877 aa).

The disordered stretch occupies residues 48-289 (SSFQNSAPAE…QITKRKERPL (242 aa)). The segment covering 78–89 (RKNEKKPEENNT) has biased composition (basic and acidic residues). Positions 92-101 (KSNRRRNNKR) are enriched in basic residues. The span at 102 to 116 (RSSDRARDNKERDAK) shows a compositional bias: basic and acidic residues. Residues 123 to 132 (KAAALLQQFK) are compositionally biased toward low complexity. Basic and acidic residues-rich tracts occupy residues 135-155 (QRAE…EYHE) and 162-189 (KEQS…EKKV). The segment covering 277 to 286 (PRKQITKRKE) has biased composition (basic residues). The tr-type G domain occupies 378-547 (KRPPVVTIMG…LLQADVMELK (170 aa)). The tract at residues 387 to 394 (GHVDHGKT) is G1. GTP is bound at residue 387 to 394 (GHVDHGKT). Residues 412 to 416 (GITQR) are G2. The interval 433–436 (DTPG) is G3. GTP is bound by residues 433-437 (DTPGH) and 487-490 (NKMD). The segment at 487-490 (NKMD) is G4. The tract at residues 523–525 (SAK) is G5.

This sequence belongs to the TRAFAC class translation factor GTPase superfamily. Classic translation factor GTPase family. IF-2 subfamily.

It localises to the cytoplasm. Its function is as follows. One of the essential components for the initiation of protein synthesis. Protects formylmethionyl-tRNA from spontaneous hydrolysis and promotes its binding to the 30S ribosomal subunits. Also involved in the hydrolysis of GTP during the formation of the 70S ribosomal complex. This chain is Translation initiation factor IF-2, found in Lactobacillus acidophilus (strain ATCC 700396 / NCK56 / N2 / NCFM).